The sequence spans 495 residues: Lysine--tRNA ligase (495 aa).

Residues glutamate 406 and glutamate 413 each coordinate Mg(2+).

The protein belongs to the class-II aminoacyl-tRNA synthetase family. Homodimer. Mg(2+) serves as cofactor.

The protein localises to the cytoplasm. The catalysed reaction is tRNA(Lys) + L-lysine + ATP = L-lysyl-tRNA(Lys) + AMP + diphosphate. This Staphylococcus epidermidis (strain ATCC 35984 / DSM 28319 / BCRC 17069 / CCUG 31568 / BM 3577 / RP62A) protein is Lysine--tRNA ligase.